The sequence spans 1078 residues: Disheveled-associated activator of morphogenesis 1 (1078 aa).

Serine 34 is subject to Phosphoserine. Positions 45 to 420 constitute a GBD/FH3 domain; the sequence is LPMPPVEELD…QIVIQNDKGQ (376 aa). The stretch at 437–526 forms a coiled coil; that stretch reads RMLVNENEVK…ELSRRAVCAS (90 aa). Disordered regions lie at residues 456-480 and 524-585; these read RKEHNELQQKLEKKERECDAKTQEK and CASI…PLGA. The FH1 domain maps to 528–599; the sequence is PGGPSPGAPG…PGAPMGLALK (72 aa). Composition is skewed to pro residues over residues 530-539 and 548-585; these read GPSPGAPGGP and LLPPPPPPPLPGGMLPPPPPPLPPGGPPPPPGPPPLGA. The FH2 domain occupies 600-1009; the sequence is KKSIPQPTNA…EERRARMEAQ (410 aa). The segment at 693–702 is actin-binding; it reads AQNCNILLSR. Positions 987-1027 are enriched in basic and acidic residues; the sequence is KQENENMRKKKEEEERRARMEAQLKEQRERERKMRKAKENS. Disordered stretches follow at residues 987–1034 and 1055–1078; these read KQEN…GEFD and RNRKRITNQMTDSSRERPITKLNF. Phosphoserine occurs at positions 1027 and 1030. The 32-residue stretch at 1027–1058 folds into the DAD domain; sequence SEESGEFDDLVSALRSGEVFDKDLSKLKRNRK. Residues 1067–1078 are compositionally biased toward basic and acidic residues; that stretch reads SSRERPITKLNF.

This sequence belongs to the formin homology family. As to quaternary structure, homodimer. Interacts with CIP4, FNBP1 and FNBP1L. Interacts with the SH3 domains of Abl, BTK, endophilin, spectrin and SRC. Binds specifically to GTP-bound CDC42 and RHOA. Interacts with INTU; INTU mediates the indirect interaction between DAAM1 and NPHP4. Interacts (via coiled coil domain) with KANK1 (via coiled coil domain). As to expression, expressed in all tissues examined.

It localises to the cytoplasm. The protein localises to the cytoskeleton. Its subcellular location is the cilium basal body. In terms of biological role, binds to disheveled (Dvl) and Rho, and mediates Wnt-induced Dvl-Rho complex formation. May play a role as a scaffolding protein to recruit Rho-GDP and Rho-GEF, thereby enhancing Rho-GTP formation. Can direct nucleation and elongation of new actin filaments. Involved in building functional cilia. Involved in the organization of the subapical actin network in multiciliated epithelial cells. Together with DAAM2, required for myocardial maturation and sarcomere assembly. During cell division, may regulate RHOA activation that signals spindle orientation and chromosomal segregation. This chain is Disheveled-associated activator of morphogenesis 1 (DAAM1), found in Homo sapiens (Human).